We begin with the raw amino-acid sequence, 602 residues long: Trichothecene efflux pump TRI12 (602 aa).

Transmembrane regions (helical) follow at residues 49–69 (LTLLSTYFAFEASAAAISFII), 77–97 (NVSLFSTVWTVSQSISILLMG), 107–127 (GFILGTNCVGIIGGIGCLYSF), and 134–154 (IGAQVLLGLAAGQPGACILFI). An N-linked (GlcNAc...) asparagine glycan is attached at N160. 11 consecutive transmembrane segments (helical) span residues 164–184 (FLGNVIVAFPNVIATGFGPYI), 196–216 (WIFYIYIIITAVSTVLAFIFY), 240–260 (WIGAFFLTAGMTLFLLGVSWG), 271–291 (ILGLLISGIVSCVIFVLYECY), 297–317 (PIIPMEFFPGTFAGFGCMLLI), 355–375 (STAGFGIWAGIVTLGSLFHIF), 380–400 (WQLIFGSAWVTAFLGAMASVN), 408–428 (IAFSICTGFVIGWAEDVTMLL), 450–470 (AICGSIFTAAFISLYTIKFPG), 484–504 (WGFPGVLLVAGFAYWRALTGQ), and 532–552 (AAAYSYVYYFAMALGVIAIIA). N590 is a glycosylation site (N-linked (GlcNAc...) asparagine).

Belongs to the major facilitator superfamily.

It localises to the cell membrane. Functionally, efflux pump that provides the dual role of trichothecene export and self-protection by allowing the fungus to evade the harmful effect of its own trichothecene production. The polypeptide is Trichothecene efflux pump TRI12 (Trichoderma arundinaceum).